The chain runs to 164 residues: Peptide methionine sulfoxide reductase MsrA (164 aa).

The active site involves cysteine 16.

Belongs to the MsrA Met sulfoxide reductase family.

It catalyses the reaction L-methionyl-[protein] + [thioredoxin]-disulfide + H2O = L-methionyl-(S)-S-oxide-[protein] + [thioredoxin]-dithiol. The enzyme catalyses [thioredoxin]-disulfide + L-methionine + H2O = L-methionine (S)-S-oxide + [thioredoxin]-dithiol. Its function is as follows. Has an important function as a repair enzyme for proteins that have been inactivated by oxidation. Catalyzes the reversible oxidation-reduction of methionine sulfoxide in proteins to methionine. This chain is Peptide methionine sulfoxide reductase MsrA, found in Clostridium tetani (strain Massachusetts / E88).